The primary structure comprises 592 residues: Condensin-2 complex subunit H2 (592 aa).

Disordered regions lie at residues 89 to 116 (NKKR…DGCE) and 261 to 285 (EAPS…PKQL). Positions 96–108 (GSSSDGNQEQAPS) are enriched in polar residues.

This sequence belongs to the CND2 H2 (condensin-2 subunit 2) family. As to quaternary structure, component of the condensin-2 complex, which contains the smc2 and smc4 heterodimer, and three non SMC subunits, ncapg2, ncaph2 and ncapd3 that probably regulate the complex.

It is found in the nucleus. Regulatory subunit of the condensin-2 complex, a complex that seems to provide chromosomes with an additional level of organization and rigidity and in establishing mitotic chromosome architecture. This Danio rerio (Zebrafish) protein is Condensin-2 complex subunit H2 (ncaph2).